The primary structure comprises 530 residues: Dual specificity calcium/calmodulin-dependent 3',5'-cyclic nucleotide phosphodiesterase 1A (530 aa).

Calmodulin-binding regions lie at residues 24-44 (TEKMWQRLKGILRCLVKQLEK) and 114-137 (EKPRFRSIVHVVQAGIFVERMYRK). The PDEase domain occupies 142–508 (VGLAYPEAVI…ERWKELAAQG (367 aa)). His-219 functions as the Proton donor in the catalytic mechanism. 4 residues coordinate Zn(2+): His-223, His-259, Asp-260, and Asp-366. Residue Asp-260 participates in Mg(2+) binding. Disordered regions lie at residues 450–471 (TKTPSYGASRRSNMKGTTNDGT) and 502–530 (KELAAQGEPDPHKNSDLVNAEEKHAETHS). The span at 451-471 (KTPSYGASRRSNMKGTTNDGT) shows a compositional bias: polar residues. Residues 510-530 (PDPHKNSDLVNAEEKHAETHS) show a composition bias toward basic and acidic residues.

It belongs to the cyclic nucleotide phosphodiesterase family. PDE1 subfamily. Homodimer. Interacts with YWHAZ. Zn(2+) is required as a cofactor. It depends on Mg(2+) as a cofactor.

The catalysed reaction is a nucleoside 3',5'-cyclic phosphate + H2O = a nucleoside 5'-phosphate + H(+). It carries out the reaction 3',5'-cyclic GMP + H2O = GMP + H(+). The enzyme catalyses 3',5'-cyclic AMP + H2O = AMP + H(+). Its activity is regulated as follows. Type I PDE are activated by the binding of calmodulin in the presence of Ca(2+). Calcium/calmodulin-dependent cyclic nucleotide phosphodiesterase with a dual specificity for the second messengers cGMP and cAMP, which are key regulators of many important physiological processes. Has a higher efficiency with cGMP compared to cAMP. This chain is Dual specificity calcium/calmodulin-dependent 3',5'-cyclic nucleotide phosphodiesterase 1A, found in Bos taurus (Bovine).